The chain runs to 719 residues: Ferric reductase transmembrane component 4 (719 aa).

The N-terminal stretch at 1 to 18 (MLLVHIISFLLFFQLSAA) is a signal peptide. The Extracellular segment spans residues 19–156 (KAPPSKTSLI…YGYYYNHDIP (138 aa)). N-linked (GlcNAc...) asparagine glycosylation is found at N51, N80, N101, N113, N127, and N135. Residues 157 to 177 (YYFGGIICAYFVGVMLLAGLI) traverse the membrane as a helical segment. Residues 178–228 (RFLNYTPIKKIMFQQKLVNYVRGYTTLPTLYEKHAEPFSYLKVITGYLPTR) lie on the Cytoplasmic side of the membrane. The helical transmembrane segment at 229-249 (FETLVILGYLILHTIFMAYKY) threads the bilayer. Residues 250–267 (QYDPYHIIFAAHRAEVAH) are Extracellular-facing. The helical transmembrane segment at 268–288 (FVAYRSGILSFAHLPLIVLFA) threads the bilayer. The 135-residue stretch at 273–407 (SGILSFAHLP…SGIEWIYAAI (135 aa)) folds into the Ferric oxidoreductase domain. The Cytoplasmic portion of the chain corresponds to 289–304 (GRNNFLQLISGLKHTS). A helical transmembrane segment spans residues 305 to 325 (FIVFHKWLGRMMFLDAIIHAA). Heme-binding residues include H309 and H323. Topologically, residues 326 to 346 (GFTNYYLYYKKWNTVRLRVYW) are extracellular. A helical transmembrane segment spans residues 347–367 (KFGIATTCLAGMLIFFSIAAF). Residues 368-373 (RRHYYE) lie on the Cytoplasmic side of the membrane. The chain crosses the membrane as a helical span at residues 374 to 394 (TFMALHIVFAALFLYTCWEHV). H379 and H393 together coordinate heme. Residue T395 is a topological domain, extracellular. The helical transmembrane segment at 396–416 (NFSGIEWIYAAIAIWGVDRIV) threads the bilayer. The 120-residue stretch at 408-527 (AIWGVDRIVR…EGPYGSKSTA (120 aa)) folds into the FAD-binding FR-type domain. Residues 417–719 (RITRIALLGF…IEYLEEYQAW (303 aa)) lie on the Cytoplasmic side of the membrane. 472 to 478 (HPFTVMD) is an FAD binding site. Residue 519-522 (GPYG) participates in NADP(+) binding. 2 stretches are compositionally biased toward polar residues: residues 606-618 (EKIS…NGET) and 625-643 (SSLS…TELP). The disordered stretch occupies residues 606 to 643 (EKISSNEVKNGETTAEKAPSSLSNSEKAPSESENTELP). Residue 685–686 (CG) participates in NADP(+) binding.

Belongs to the ferric reductase (FRE) family. FAD serves as cofactor.

Its subcellular location is the cell membrane. It carries out the reaction 2 a Fe(II)-siderophore + NADP(+) + H(+) = 2 a Fe(III)-siderophore + NADPH. Its function is as follows. Siderophore-iron reductase responsible for reducing extracellular iron prior to import. Catalyzes the reductive uptake of Fe(3+) bound to dihydroxamate rhodotorulic acid. Fe(3+) is reduced to Fe(2+), which then dissociates from the siderophore and can be imported by the high-affinity Fe(2+) transport complex in the plasma membrane. In Saccharomyces cerevisiae (strain ATCC 204508 / S288c) (Baker's yeast), this protein is Ferric reductase transmembrane component 4 (FRE4).